The chain runs to 154 residues: Holo-[acyl-carrier-protein] synthase (154 aa).

Mg(2+)-binding residues include D8 and E57.

This sequence belongs to the P-Pant transferase superfamily. AcpS family. Requires Mg(2+) as cofactor.

The protein resides in the cytoplasm. It carries out the reaction apo-[ACP] + CoA = holo-[ACP] + adenosine 3',5'-bisphosphate + H(+). Its function is as follows. Transfers the 4'-phosphopantetheine moiety from coenzyme A to a Ser of acyl-carrier-protein. This chain is Holo-[acyl-carrier-protein] synthase, found in Nitrosococcus oceani (strain ATCC 19707 / BCRC 17464 / JCM 30415 / NCIMB 11848 / C-107).